The primary structure comprises 531 residues: Large neutral amino acids transporter small subunit 2 (531 aa).

Positions 1-29 are disordered; the sequence is MEKGARQRNNTAKNHPGSDTSPEAEASSG. Topologically, residues 1 to 43 are cytoplasmic; sequence MEKGARQRNNTAKNHPGSDTSPEAEASSGGGGVALKKEIGLVS. The span at 7–21 shows a compositional bias: polar residues; that stretch reads QRNNTAKNHPGSDTS. Phosphoserine occurs at positions 18, 21, 27, and 28. The chain crosses the membrane as a helical span at residues 44–64; sequence ACGIIVGNIIGSGIFVSPKGV. Residue isoleucine 52 coordinates L-leucine. Over 65–72 the chain is Extracellular; that stretch reads LENAGSVG. A helical transmembrane segment spans residues 73–94; it reads LALIVWIVTGIITAVGALCYAE. At 95 to 115 the chain is on the cytoplasmic side; sequence LGVTIPKSGGDYSYVKDIFGG. Residues 116–148 traverse the membrane as a helical segment; sequence LAGFLRLWIAVLVIYPTNQAVIALTFSNYVLQP. Asparagine 133 contacts L-tryptophan. The Extracellular segment spans residues 149-156; the sequence is LFPTCFPP. The helical transmembrane segment at 157–177 threads the bilayer; sequence ESGLRLLAAICLLLLTWVNCS. Residues 178 to 180 are Cytoplasmic-facing; sequence SVR. Residues 181–209 traverse the membrane as a helical segment; sequence WATRVQDIFTAGKLLALALIIIMGIVQIC. At 210 to 229 the chain is on the extracellular side; sequence KGEFFWLEPKNAFENFQEPD. A helical transmembrane segment spans residues 230-251; sequence IGLVALAFLQGSFAYGGWNFLN. Glycine 245 lines the L-leucine pocket. The Cytoplasmic segment spans residues 252 to 264; it reads YVTEELVDPYKNL. Residues 265-286 traverse the membrane as a helical segment; it reads PRAIFISIPLVTFVYVFANIAY. At 287–311 the chain is on the extracellular side; it reads VTAMSPQELLASNAVAVTFGEKLLG. A helical membrane pass occupies residues 312 to 337; the sequence is VMAWIMPISVALSTFGGVNGSLFTSS. Residues 338-363 lie on the Cytoplasmic side of the membrane; it reads RLFFAGAREGHLPSVLAMIHVKRCTP. The chain crosses the membrane as a helical span at residues 364–381; that stretch reads IPALLFTCLSTLLMLVTS. Over 382–385 the chain is Extracellular; the sequence is DMYT. Residues 386–407 form a helical membrane-spanning segment; the sequence is LINYVGFINYLFYGVTVAGQIV. Asparagine 394 is an L-tryptophan binding site. Over 408–422 the chain is Cytoplasmic; it reads LRWKKPDIPRPIKVS. The next 2 helical transmembrane spans lie at 423-445 and 446-465; these read LLFP…WSEP and VVCG…YFLG. Over 466–531 the chain is Cytoplasmic; the sequence is VYWQHKPKCF…VKDPDSEEQP (66 aa). Positions 499–531 are disordered; that stretch reads NSGAEETTDDLEEQHKPIFKPTPVKDPDSEEQP. A Phosphoserine modification is found at serine 527.

Belongs to the amino acid-polyamine-organocation (APC) superfamily. L-type amino acid transporter (LAT) (TC 2.A.3.8) family. In terms of assembly, disulfide-linked heterodimer composed of the catalytic light chain subunit SLC7A8 and the heavy chain subunit SLC3A2. SLC3A2 acts as a chaperone for correct plasma membrane trafficking and stabilization of SLC7A8 and modulates the substrate affinity and specificity of SLC7A8. ICAM-1 associates with the heterodimer SLC3A2/SLC7A8; facilitates leucine uptake. In terms of tissue distribution, strongly expressed in kidney and small intestine. Moderately present in placenta, ovary and brain. Expressed in the inner ear.

The protein localises to the cell membrane. It is found in the basolateral cell membrane. The catalysed reaction is L-histidine(in) + L-phenylalanine(out) = L-histidine(out) + L-phenylalanine(in). It catalyses the reaction L-tryptophan(in) + L-phenylalanine(out) = L-tryptophan(out) + L-phenylalanine(in). It carries out the reaction L-isoleucine(in) + L-phenylalanine(out) = L-isoleucine(out) + L-phenylalanine(in). The enzyme catalyses L-valine(in) + L-phenylalanine(out) = L-valine(out) + L-phenylalanine(in). The catalysed reaction is L-leucine(in) + L-phenylalanine(out) = L-leucine(out) + L-phenylalanine(in). It catalyses the reaction L-glutamine(in) + L-phenylalanine(out) = L-glutamine(out) + L-phenylalanine(in). It carries out the reaction L-cysteine(in) + L-phenylalanine(out) = L-cysteine(out) + L-phenylalanine(in). The enzyme catalyses L-phenylalanine(out) + L-methionine(in) = L-phenylalanine(in) + L-methionine(out). The catalysed reaction is L-leucine(out) + L-methionine(in) = L-leucine(in) + L-methionine(out). It catalyses the reaction L-cysteine(out) + L-methionine(in) = L-cysteine(in) + L-methionine(out). It carries out the reaction S-methylmercury-L-cysteine(out) + L-methionine(in) = S-methylmercury-L-cysteine(in) + L-methionine(out). The enzyme catalyses S-methylmercury-L-cysteine(in) + L-leucine(out) = S-methylmercury-L-cysteine(out) + L-leucine(in). The catalysed reaction is S-methylmercury-L-cysteine(in) + L-phenylalanine(out) = S-methylmercury-L-cysteine(out) + L-phenylalanine(in). It catalyses the reaction L-phenylalanine(out) + L-serine(in) = L-phenylalanine(in) + L-serine(out). It carries out the reaction L-phenylalanine(out) + glycine(in) = L-phenylalanine(in) + glycine(out). The enzyme catalyses L-phenylalanine(out) + L-alanine(in) = L-phenylalanine(in) + L-alanine(out). The catalysed reaction is L-tryptophan(in) = L-tryptophan(out). It catalyses the reaction 3,3',5-triiodo-L-thyronine(out) = 3,3',5-triiodo-L-thyronine(in). It carries out the reaction 3,3'-diiodo-L-thyronine(out) = 3,3'-diiodo-L-thyronine(in). The enzyme catalyses L-dopa(out) + L-phenylalanine(in) = L-dopa(in) + L-phenylalanine(out). Functionally, associates with SLC3A2 to form a functional heterodimeric complex that translocates small and large neutral amino acids with broad specificity and a stoichiometry of 1:1. Functions as amino acid antiporter mediating the influx of extracellular essential amino acids mainly in exchange with the efflux of highly concentrated intracellular amino acids. Has relatively symmetrical selectivities but strongly asymmetrical substrate affinities at both the intracellular and extracellular sides of the transporter. This asymmetry allows SLC7A8 to regulate intracellular amino acid pools (mM concentrations) by exchange with external amino acids (uM concentration range), equilibrating the relative concentrations of different amino acids across the plasma membrane instead of mediating their net uptake. May play an essential role in the reabsorption of neutral amino acids from the epithelial cells to the bloodstream in the kidney. Involved in the uptake of methylmercury (MeHg) when administered as the L-cysteine or D,L-homocysteine complexes, and hence plays a role in metal ion homeostasis and toxicity. Involved in the cellular activity of small molecular weight nitrosothiols, via the stereoselective transport of L-nitrosocysteine (L-CNSO) across the transmembrane. Imports the thyroid hormone diiodothyronine (T2) and to a smaller extent triiodothyronine (T3) but not rT 3 or thyroxine (T4). Mediates the uptake of L-DOPA. May participate in auditory function. This chain is Large neutral amino acids transporter small subunit 2 (Slc7a8), found in Mus musculus (Mouse).